A 76-amino-acid chain; its full sequence is Exodeoxyribonuclease 7 small subunit (76 aa).

Belongs to the XseB family. As to quaternary structure, heterooligomer composed of large and small subunits.

It is found in the cytoplasm. It carries out the reaction Exonucleolytic cleavage in either 5'- to 3'- or 3'- to 5'-direction to yield nucleoside 5'-phosphates.. Bidirectionally degrades single-stranded DNA into large acid-insoluble oligonucleotides, which are then degraded further into small acid-soluble oligonucleotides. In Legionella pneumophila (strain Paris), this protein is Exodeoxyribonuclease 7 small subunit.